Consider the following 111-residue polypeptide: UPF0375 protein ule-4 (111 aa).

Positions Met-1–Ala-18 are cleaved as a signal peptide. Asn-23 and Asn-58 each carry an N-linked (GlcNAc...) asparagine glycan.

Belongs to the UPF0375 family.

The protein localises to the secreted. This chain is UPF0375 protein ule-4, found in Caenorhabditis elegans.